The primary structure comprises 470 residues: Glutamate--tRNA ligase (470 aa).

The short motif at 12–22 is the 'HIGH' region element; the sequence is PSPTGIFHVGG. Cysteine 103, cysteine 105, cysteine 125, and aspartate 127 together coordinate Zn(2+). The 'KMSKS' region motif lies at 236–240; that stretch reads KLSKR. Lysine 239 is a binding site for ATP.

Belongs to the class-I aminoacyl-tRNA synthetase family. Glutamate--tRNA ligase type 1 subfamily. Monomer. It depends on Zn(2+) as a cofactor.

It localises to the cytoplasm. It catalyses the reaction tRNA(Glu) + L-glutamate + ATP = L-glutamyl-tRNA(Glu) + AMP + diphosphate. In terms of biological role, catalyzes the attachment of glutamate to tRNA(Glu) in a two-step reaction: glutamate is first activated by ATP to form Glu-AMP and then transferred to the acceptor end of tRNA(Glu). In Frankia alni (strain DSM 45986 / CECT 9034 / ACN14a), this protein is Glutamate--tRNA ligase.